Reading from the N-terminus, the 917-residue chain is Calcium-activated chloride channel regulator 1 (917 aa).

The first 21 residues, 1-21 (MGSFRSSLFILVLHLLEGAQS), serve as a signal peptide directing secretion. The segment at 46 to 199 (DERLIQNIKD…AIRGTNVLPQ (154 aa)) is metalloprotease domain. H156 provides a ligand contact to Zn(2+). The active site involves E157. 2 residues coordinate Zn(2+): H160 and N167. The region spanning 306–475 (IVCLVLDKSG…NGLIDAFGAL (170 aa)) is the VWFA domain. N503, N772, N806, N812, N838, and N893 each carry an N-linked (GlcNAc...) asparagine glycan.

Belongs to the CLCR family. In terms of processing, glycosylated. The translation product is autoproteolytically cleaved by the metalloprotease domain in the endoplasmic reticulum into a N-terminal and a C-terminal products that remain physically associated with each other. The cleavage is necessary for calcium-activated chloride channel (CaCC) activation activity. Expressed in ileum, trachea, and the major salivary glands. In ileum, expressed to the crypt and villus epithelia, whereas in trachea expressed in both surface epithelium and submucosal glands.

It is found in the secreted. Its subcellular location is the extracellular space. Functionally, may be involved in mediating calcium-activated chloride conductance. May play critical roles in goblet cell metaplasia, mucus hypersecretion, cystic fibrosis and AHR. May be involved in the regulation of mucus production and/or secretion by goblet cells. Involved in the regulation of tissue inflammation in the innate immune response. May play a role as a tumor suppressor. Induces MUC5AC. Induces a cAMP-dependent chloride conductance possibly through effects on CFTR in colon carcinoma cells. This is Calcium-activated chloride channel regulator 1 (CLCA1) from Sus scrofa (Pig).